The sequence spans 29 residues: Trypsin inhibitor 3 (29 aa).

Disulfide bonds link Cys-3–Cys-20, Cys-10–Cys-22, and Cys-16–Cys-28.

This sequence belongs to the protease inhibitor I7 (squash-type serine protease inhibitor) family.

It is found in the secreted. Its function is as follows. Inhibits trypsin. The sequence is that of Trypsin inhibitor 3 from Luffa aegyptiaca (Sponge gourd).